The following is a 117-amino-acid chain: Ig heavy chain V region RF (117 aa).

Positions 1–19 (MNFGLRLIFLVLVLKGVLC) are cleaved as a signal peptide. The interval 20–49 (DVKLVESGGGLVKLGGSLKLSCAASGFTFS) is framework-1. A disulfide bridge links cysteine 41 with cysteine 115. A complementarity-determining-1 region spans residues 50-54 (SYYMS). The interval 55 to 68 (WVRQTPEKRLELVA) is framework-2. The tract at residues 69-85 (AINSNGGSTYYPDTVKG) is complementarity-determining-2. The framework-3 stretch occupies residues 86–117 (RFTISRDNAKNTLYLQMSSLKSEDTALYYCAR).

The polypeptide is Ig heavy chain V region RF (Mus musculus (Mouse)).